The primary structure comprises 107 residues: uncharacterized protein (107 aa).

Residues 1 to 34 (MRLQWPKFITFLSTGSCCLLFLLLPCSFFPLPTA) form the signal peptide.

This is an uncharacterized protein from Saccharomyces cerevisiae (strain ATCC 204508 / S288c) (Baker's yeast).